Reading from the N-terminus, the 173-residue chain is Dual-action ribosomal maturation protein DarP (173 aa).

The protein belongs to the DarP family.

The protein resides in the cytoplasm. Functionally, member of a network of 50S ribosomal subunit biogenesis factors which assembles along the 30S-50S interface, preventing incorrect 23S rRNA structures from forming. Promotes peptidyl transferase center (PTC) maturation. This is Dual-action ribosomal maturation protein DarP from Pseudomonas putida (strain GB-1).